The sequence spans 212 residues: uncharacterized protein (212 aa).

The next 2 helical transmembrane spans lie at 54–74 (LCFA…GYAG) and 79–99 (WIIC…ALLL).

Its subcellular location is the cell membrane. This is an uncharacterized protein from Chlamydia pneumoniae (Chlamydophila pneumoniae).